The sequence spans 210 residues: Putative protein-lysine deacylase ABHD14B (210 aa).

Ala-2 is modified (N-acetylalanine). Ser-91 is modified (phosphoserine). Catalysis depends on charge relay system residues Ser-111, Asp-162, and His-188.

Belongs to the AB hydrolase superfamily. ABHD14 family. May interact with TAF1. Ubiquitous. Detected in spleen, thymus, prostate, testis, ovary, small intestine, colon, peripheral blood leukocyte, heart, placenta, lung, liver, skeletal muscle, pancreas and kidney.

It localises to the cytoplasm. It is found in the nucleus. It catalyses the reaction L-lysyl-[protein] + acetyl-CoA = N(6)-acetyl-L-lysyl-[protein] + CoA + H(+). Its function is as follows. Acts as an atypical protein-lysine deacetylase in vitro. Catalyzes the deacetylation of lysine residues using CoA as substrate, generating acetyl-CoA and the free amine of protein-lysine residues. Additional experiments are however required to confirm the protein-lysine deacetylase activity in vivo. Has hydrolase activity towards various surrogate p-nitrophenyl (pNp) substrates, such as pNp-butyrate, pNp-acetate and pNp-octanoate in vitro, with a strong preference for pNp-acetate. May activate transcription. This chain is Putative protein-lysine deacylase ABHD14B, found in Homo sapiens (Human).